Reading from the N-terminus, the 212-residue chain is tRNA (guanine-N(7)-)-methyltransferase (212 aa).

Positions 44, 69, 96, and 118 each coordinate S-adenosyl-L-methionine. Asp-118 is a catalytic residue. Position 122 (Lys-122) interacts with substrate. Positions 124-129 are interaction with RNA; it reads RHEKRR. Substrate contacts are provided by residues Asp-154 and 191–194; that span reads TEYE.

The protein belongs to the class I-like SAM-binding methyltransferase superfamily. TrmB family.

It carries out the reaction guanosine(46) in tRNA + S-adenosyl-L-methionine = N(7)-methylguanosine(46) in tRNA + S-adenosyl-L-homocysteine. The protein operates within tRNA modification; N(7)-methylguanine-tRNA biosynthesis. Catalyzes the formation of N(7)-methylguanine at position 46 (m7G46) in tRNA. The polypeptide is tRNA (guanine-N(7)-)-methyltransferase (Streptococcus suis (strain 05ZYH33)).